Here is a 640-residue protein sequence, read N- to C-terminus: Threonine--tRNA ligase (640 aa).

The TGS domain occupies 1 to 60 (MKITFPDGAVKEFEPGVSTADIAASISPGLKKKALAGKLNGELLDLVTPIHEDGAIEIVT). The segment at 241 to 538 (DHRKLGKELE…LIEEYKGAFP (298 aa)) is catalytic. Zn(2+) contacts are provided by Cys334, His385, and His515.

It belongs to the class-II aminoacyl-tRNA synthetase family. As to quaternary structure, homodimer. Zn(2+) is required as a cofactor.

The protein resides in the cytoplasm. The enzyme catalyses tRNA(Thr) + L-threonine + ATP = L-threonyl-tRNA(Thr) + AMP + diphosphate + H(+). In terms of biological role, catalyzes the attachment of threonine to tRNA(Thr) in a two-step reaction: L-threonine is first activated by ATP to form Thr-AMP and then transferred to the acceptor end of tRNA(Thr). Also edits incorrectly charged L-seryl-tRNA(Thr). This Listeria welshimeri serovar 6b (strain ATCC 35897 / DSM 20650 / CCUG 15529 / CIP 8149 / NCTC 11857 / SLCC 5334 / V8) protein is Threonine--tRNA ligase.